We begin with the raw amino-acid sequence, 97 residues long: U6-theraphotoxin-Hhn1a 2 (97 aa).

An N-terminal signal peptide occupies residues 1-33 (MLIKQFSRRPKNMKVQILLAFAALFVLAVGSYA). Residues 34–61 (SESKKLDLRDASFSAMFSADYQLNPQER) constitute a propeptide that is removed on maturation. Disulfide bonds link cysteine 63–cysteine 77, cysteine 70–cysteine 82, and cysteine 76–cysteine 89.

Belongs to the neurotoxin 10 (Hwtx-1) family. 12 (Hntx-12) subfamily. In terms of tissue distribution, expressed by the venom gland.

The protein localises to the secreted. Ion channel inhibitor. The polypeptide is U6-theraphotoxin-Hhn1a 2 (Cyriopagopus hainanus (Chinese bird spider)).